We begin with the raw amino-acid sequence, 733 residues long: MNEERKCPITGATHKPSAEKGRSNHDWWPNQLNLKILHQHSALSNPMDKDFNYAEEFKKLDLAAIKQDLYALMTDSQEWWPADYGHYGPLFIRMAWHSAGTYRTSDGRGGAGTGSQRFAPLNSWPDNANLDKARRLLWPIKQKYGRQISWADLMILTGNCALESMGLKTFGFAGGREDIWEPEEDIYWGTEGEWLADKRYSGERELEKPLAAVQMGLIYVNPEGPNGKPDPLAAAKDIRETFARMAMNDEETVALIAGGHTFGKTHGAGDASQVGPEPEAAGIEEQGLGWKNQYGTGKGKDTITSGLEVIWTTTPTKWSNNFFWNLFGYEWELTKSPAGAYQWTPKYGVGANTVPDAHDPSKRHAPAMMTTDLALRFDPDYEKIARRYYENPDQFADAFARAWFKLTHRDMGPRSRYRGAEVPVEELIWQDTIPALDHELIGADEIAALKATILASELSIAQLISTAWASAATFRNSDKRGGANGARLRLAPQKDWEVNQPDELQKVLQVLETIQTEFNASRNDGKKVSLADLIVLGGCAAIEAAAEKAGYKVTVPFTPGRMDATQEETDAHSFAVLEPVADGFRNYLKAKYSFSVEEMLIDKAQLLTLTAPEMTVLIGGMRVLNTNAGHTTHGVFTKRPETLSNDFFVNLLDMGTVWKATSEASDIFEGRNRSTGELQWTATRVDLVFGSNSQLRALVEVYGCKDSQEKFLNDFIAAWNKVMNLDRFDLSGL.

A disordered region spans residues 1 to 25 (MNEERKCPITGATHKPSAEKGRSNH). A compositionally biased stretch (basic and acidic residues) spans 16–25 (PSAEKGRSNH). Positions 96-219 (WHSAGTYRTS…LAAVQMGLIY (124 aa)) form a cross-link, tryptophyl-tyrosyl-methioninium (Trp-Tyr) (with M-245). His-97 serves as the catalytic Proton acceptor. Residues 219 to 245 (YVNPEGPNGKPDPLAAAKDIRETFARM) constitute a cross-link (tryptophyl-tyrosyl-methioninium (Tyr-Met) (with W-96)). His-260 lines the heme b pocket.

It belongs to the peroxidase family. Peroxidase/catalase subfamily. In terms of assembly, homodimer or homotetramer. The cofactor is heme b. Post-translationally, formation of the three residue Trp-Tyr-Met cross-link is important for the catalase, but not the peroxidase activity of the enzyme.

The enzyme catalyses H2O2 + AH2 = A + 2 H2O. It carries out the reaction 2 H2O2 = O2 + 2 H2O. In terms of biological role, bifunctional enzyme with both catalase and broad-spectrum peroxidase activity. In Chlorobium chlorochromatii (strain CaD3), this protein is Catalase-peroxidase.